Here is a 298-residue protein sequence, read N- to C-terminus: NFU1 iron-sulfur cluster scaffold homolog, mitochondrial (298 aa).

A nifU region spans residues 190 to 258 (IKELLDTRIR…IPEVESVEQV (69 aa)). Residues cysteine 227 and cysteine 230 each coordinate [4Fe-4S] cluster. A compositionally biased stretch (polar residues) spans 279–288 (QKESVNQPNA). Residues 279–298 (QKESVNQPNAPVNIGGGTPN) are disordered.

It belongs to the NifU family.

The protein localises to the mitochondrion. In terms of biological role, molecular scaffold for [Fe-S] cluster assembly of mitochondrial iron-sulfur proteins. The chain is NFU1 iron-sulfur cluster scaffold homolog, mitochondrial from Drosophila virilis (Fruit fly).